Here is a 193-residue protein sequence, read N- to C-terminus: Potassium-transporting ATPase KdpC subunit (193 aa).

A helical transmembrane segment spans residues 8-28 (VVLLIFLTLITGVAYPLLATG).

The protein belongs to the KdpC family. In terms of assembly, the system is composed of three essential subunits: KdpA, KdpB and KdpC.

Its subcellular location is the cell inner membrane. Part of the high-affinity ATP-driven potassium transport (or Kdp) system, which catalyzes the hydrolysis of ATP coupled with the electrogenic transport of potassium into the cytoplasm. This subunit acts as a catalytic chaperone that increases the ATP-binding affinity of the ATP-hydrolyzing subunit KdpB by the formation of a transient KdpB/KdpC/ATP ternary complex. This chain is Potassium-transporting ATPase KdpC subunit, found in Photorhabdus laumondii subsp. laumondii (strain DSM 15139 / CIP 105565 / TT01) (Photorhabdus luminescens subsp. laumondii).